Consider the following 473-residue polypeptide: GTPase Der (473 aa).

EngA-type G domains are found at residues 3–167 and 203–378; these read FTVA…GKDR and LRVA…RVWN. GTP contacts are provided by residues 9-16, 56-60, 119-122, 209-216, 256-260, and 321-324; these read GRPNVGKS, DTAGL, NKSE, GRPNAGKS, DTAGM, and NKWD. The region spanning 379-463 is the KH-like domain; the sequence is KRISTAKLNR…PIRIHFRSAE (85 aa).

The protein belongs to the TRAFAC class TrmE-Era-EngA-EngB-Septin-like GTPase superfamily. EngA (Der) GTPase family. In terms of assembly, associates with the 50S ribosomal subunit.

Functionally, GTPase that plays an essential role in the late steps of ribosome biogenesis. The protein is GTPase Der of Rhizobium leguminosarum bv. trifolii (strain WSM2304).